The following is a 250-amino-acid chain: Recombination protein RecR (250 aa).

The C4-type zinc finger occupies 56 to 71; the sequence is CRICHNISQEDVCRIC. Residues 79 to 227 enclose the Toprim domain; that stretch reads SIICVVEESK…TVTRLASGIP (149 aa). Positions 148-172 are disordered; the sequence is LGDADTPADGESSGADAAETGNAKT.

It belongs to the RecR family.

In terms of biological role, may play a role in DNA repair. It seems to be involved in an RecBC-independent recombinational process of DNA repair. It may act with RecF and RecO. The polypeptide is Recombination protein RecR (Corynebacterium jeikeium (strain K411)).